The following is a 136-amino-acid chain: uncharacterized protein (136 aa).

2 consecutive transmembrane segments (helical) span residues 36 to 56 and 63 to 83; these read FLLT…IYLI and FAFA…LFLS.

It localises to the cell membrane. This is an uncharacterized protein from Mycoplasma pneumoniae (strain ATCC 29342 / M129 / Subtype 1) (Mycoplasmoides pneumoniae).